Reading from the N-terminus, the 261-residue chain is Cytochrome c oxidase subunit 3 (261 aa).

Residues 1 to 15 (MTHQTHAYHMVNPSP) lie on the Mitochondrial matrix side of the membrane. The helical transmembrane segment at 16 to 34 (WPLTGALSALLMTSGLVMW) threads the bilayer. Over 35-40 (FHYNST) the chain is Mitochondrial intermembrane. The chain crosses the membrane as a helical span at residues 41 to 66 (LLLTLGLTTNLLTMYQWWRDIIREST). Residues 67–72 (FQGHHT) lie on the Mitochondrial matrix side of the membrane. A helical transmembrane segment spans residues 73–105 (PAVQKGLRYGMILFIISEVFFFSGFFWAFYHSS). At 106 to 128 (LAPTPELGGCWPPTGIHPLNPME) the chain is on the mitochondrial intermembrane side. The chain crosses the membrane as a helical span at residues 129-152 (VPLLNTSVLLASGVSITWAHHSLM). The Mitochondrial matrix portion of the chain corresponds to 153–155 (EGN). Residues 156-183 (RKHMLQALFITISLGIYFTLLQASEYYE) traverse the membrane as a helical segment. Residues 184–190 (APFTISD) are Mitochondrial intermembrane-facing. Residues 191-223 (GVYGSTFFVATGFHGLHVIIGSTFLIVCFLRQL) traverse the membrane as a helical segment. At 224-232 (KFHFTSNHH) the chain is on the mitochondrial matrix side. The helical transmembrane segment at 233–256 (FGFEAAAWYWHFVDVVWLFLYVSI) threads the bilayer. The Mitochondrial intermembrane portion of the chain corresponds to 257–261 (YWWGS).

The protein belongs to the cytochrome c oxidase subunit 3 family. In terms of assembly, component of the cytochrome c oxidase (complex IV, CIV), a multisubunit enzyme composed of 14 subunits. The complex is composed of a catalytic core of 3 subunits MT-CO1, MT-CO2 and MT-CO3, encoded in the mitochondrial DNA, and 11 supernumerary subunits COX4I, COX5A, COX5B, COX6A, COX6B, COX6C, COX7A, COX7B, COX7C, COX8 and NDUFA4, which are encoded in the nuclear genome. The complex exists as a monomer or a dimer and forms supercomplexes (SCs) in the inner mitochondrial membrane with NADH-ubiquinone oxidoreductase (complex I, CI) and ubiquinol-cytochrome c oxidoreductase (cytochrome b-c1 complex, complex III, CIII), resulting in different assemblies (supercomplex SCI(1)III(2)IV(1) and megacomplex MCI(2)III(2)IV(2)).

The protein localises to the mitochondrion inner membrane. The enzyme catalyses 4 Fe(II)-[cytochrome c] + O2 + 8 H(+)(in) = 4 Fe(III)-[cytochrome c] + 2 H2O + 4 H(+)(out). Functionally, component of the cytochrome c oxidase, the last enzyme in the mitochondrial electron transport chain which drives oxidative phosphorylation. The respiratory chain contains 3 multisubunit complexes succinate dehydrogenase (complex II, CII), ubiquinol-cytochrome c oxidoreductase (cytochrome b-c1 complex, complex III, CIII) and cytochrome c oxidase (complex IV, CIV), that cooperate to transfer electrons derived from NADH and succinate to molecular oxygen, creating an electrochemical gradient over the inner membrane that drives transmembrane transport and the ATP synthase. Cytochrome c oxidase is the component of the respiratory chain that catalyzes the reduction of oxygen to water. Electrons originating from reduced cytochrome c in the intermembrane space (IMS) are transferred via the dinuclear copper A center (CU(A)) of subunit 2 and heme A of subunit 1 to the active site in subunit 1, a binuclear center (BNC) formed by heme A3 and copper B (CU(B)). The BNC reduces molecular oxygen to 2 water molecules using 4 electrons from cytochrome c in the IMS and 4 protons from the mitochondrial matrix. The chain is Cytochrome c oxidase subunit 3 (MT-CO3) from Rhinoceros unicornis (Greater Indian rhinoceros).